Reading from the N-terminus, the 98-residue chain is Keratin-associated protein 3-3 (98 aa).

3 repeat units span residues Cys-3–Arg-7, Cys-47–Cys-51, and Cys-89–Cys-93. Positions Cys-3–Gln-59 are 3 X 5 AA repeats of C-C-X(3).

This sequence belongs to the KRTAP type 3 family. In terms of assembly, interacts with hair keratins. In terms of tissue distribution, localized to the upper cortex of the hair shaft.

In terms of biological role, in the hair cortex, hair keratin intermediate filaments are embedded in an interfilamentous matrix, consisting of hair keratin-associated proteins (KRTAP), which are essential for the formation of a rigid and resistant hair shaft through their extensive disulfide bond cross-linking with abundant cysteine residues of hair keratins. The matrix proteins include the high-sulfur and high-glycine-tyrosine keratins. This chain is Keratin-associated protein 3-3 (KRTAP3-3), found in Homo sapiens (Human).